We begin with the raw amino-acid sequence, 267 residues long: Orotidine 5'-phosphate decarboxylase (267 aa).

Substrate contacts are provided by residues Asp38, 60 to 62 (KTH), 92 to 101 (DRKFADIGNT), Tyr218, and Arg236. Catalysis depends on Lys94, which acts as the Proton donor.

This sequence belongs to the OMP decarboxylase family.

The catalysed reaction is orotidine 5'-phosphate + H(+) = UMP + CO2. The protein operates within pyrimidine metabolism; UMP biosynthesis via de novo pathway; UMP from orotate: step 2/2. The chain is Orotidine 5'-phosphate decarboxylase (URA3) from Debaryomyces hansenii (strain ATCC 36239 / CBS 767 / BCRC 21394 / JCM 1990 / NBRC 0083 / IGC 2968) (Yeast).